The chain runs to 1997 residues: Chromatin-remodeling ATPase INO80 (1997 aa).

Disordered regions lie at residues 1–378 (MDHF…AAPS), 397–579 (IAAP…AENE), and 674–858 (ERKK…EKVV). A compositionally biased stretch (basic and acidic residues) spans 12–25 (PHFDEDGTEGRGDR). The segment covering 32–41 (GPAPPPPPPR) has biased composition (pro residues). The span at 49–64 (NPVSSNSAVQSQAAAA) shows a compositional bias: low complexity. Polar residues predominate over residues 89 to 107 (STNSMRATPHSSSSFNLRS). Residues 108 to 117 (PTREPSEYRH) show a composition bias toward basic and acidic residues. Low complexity-rich tracts occupy residues 118–156 (PLSSLATPAPFAASPPTSIANANNTNNNNALGAAGSLSS), 203–230 (SLQAPPAITPIAGLSAPAPASGSLPLSA), and 240–251 (SSSSQPPARASQ). The span at 264–276 (SFRDRDSSVREKS) shows a compositional bias: basic and acidic residues. The span at 288 to 297 (EASNGISGSS) shows a compositional bias: polar residues. Residues 298–317 (PRKDRDRDRDHRGTTRESQR) are compositionally biased toward basic and acidic residues. Polar residues-rich tracts occupy residues 318 to 340 (RSVSGHSDTGSSWRNATQTSASN) and 366 to 378 (VDNTTSSSIAAPS). The segment covering 411–420 (SPRLSLRPPS) has biased composition (low complexity). Composition is skewed to polar residues over residues 433–442 (NPTNGTTSTA), 451–465 (SPPSKMSPGTSTNPS), and 472–481 (SFSNILSSSE). Basic and acidic residues-rich tracts occupy residues 500 to 519 (VPMKVERADSSEKVVKEKKE) and 529 to 540 (RISDIRHSESTP). Positions 666 to 735 (ERELFAEKER…VQQTRLILQK (70 aa)) form a coiled coil. Residues 689–707 (MATTMEAKAAALARASAAQ) are compositionally biased toward low complexity. Residues 709–723 (EAERQKYMREAERAN) are compositionally biased toward basic and acidic residues. Residues 769-781 (TKGKGRAGARPKK) show a composition bias toward basic residues. The segment covering 782 to 793 (SKEQKQAEKDAA) has biased composition (basic and acidic residues). Low complexity predominate over residues 794-806 (EAAQAALDAGLEL). Positions 824–858 (APKEADVDKDKENKEPQEPKEPKEPKEKVIKEKVV) are enriched in basic and acidic residues. Residues 881–1006 (IWRDLARKDV…SHFIGKKIKT (126 aa)) form the DBINO domain. Residues 1130 to 1302 (VNLYEQGING…WALLHFIMPS (173 aa)) form the Helicase ATP-binding domain. ATP is bound at residue 1143-1150 (DEMGLGKT). The DEAQ box motif lies at 1253–1256 (DEAQ). The Helicase C-terminal domain maps to 1702–1858 (KLDELLRELK…GSSAAGGGVD (157 aa)). Over residues 1891-1902 (ELLESGELDKMQ) the composition is skewed to basic and acidic residues. Positions 1891–1986 (ELLESGELDK…GSKKAKTTKQ (96 aa)) are disordered. The span at 1903 to 1914 (KKSRGGNKRKRG) shows a compositional bias: basic residues. A compositionally biased stretch (basic and acidic residues) spans 1919 to 1933 (EGKEVSLDEMYHEGE). A compositionally biased stretch (gly residues) spans 1954-1967 (AAGGEGGDGKGAVG). Basic residues predominate over residues 1970 to 1985 (AKKRKTGGSKKAKTTK).

It belongs to the SNF2/RAD54 helicase family. As to quaternary structure, component of the INO80 chromatin-remodeling complex.

The protein localises to the nucleus. The catalysed reaction is ATP + H2O = ADP + phosphate + H(+). Its function is as follows. ATPase component of the INO80 complex which remodels chromatin by shifting nucleosomes and is involved in DNA repair. In Neurospora crassa (strain ATCC 24698 / 74-OR23-1A / CBS 708.71 / DSM 1257 / FGSC 987), this protein is Chromatin-remodeling ATPase INO80 (crf2-1).